The chain runs to 291 residues: Protease HtpX homolog (291 aa).

2 consecutive transmembrane segments (helical) span residues 4-24 and 38-58; these read VVLF…SARI and MGML…ISLL. His144 lines the Zn(2+) pocket. Glu145 is a catalytic residue. His148 serves as a coordination point for Zn(2+). 2 consecutive transmembrane segments (helical) span residues 152-172 and 199-219; these read GDMV…IFLS and ISSI…VMCF. Glu224 lines the Zn(2+) pocket.

It belongs to the peptidase M48B family. Requires Zn(2+) as cofactor.

It is found in the cell inner membrane. This chain is Protease HtpX homolog, found in Chlorobium limicola (strain DSM 245 / NBRC 103803 / 6330).